A 360-amino-acid chain; its full sequence is Phospho-N-acetylmuramoyl-pentapeptide-transferase (360 aa).

Helical transmembrane passes span 21–41, 74–94, 97–117, 134–154, 168–188, 199–219, 236–256, 263–283, 288–308, and 338–358; these read YVTFRAILGLLTAMVFSLWWG, MGGLLILAGVFISVLLWGDLG, YVWVMLFVLGAFGLIGFIDDY, YILQSLAALAIAFYLYASAGS, VMPQLGAFFILLAYFTIVGSS, GLAIMPTVMVAAAFALIAYLS, SGELVIVCTAIVGAGLGFLWF, VFMGDVGSLSLGAALGTIAVL, ILLVIMGGVFVMETVSVILQV, and VIVRFWIISLFLVLLGLATLK.

It belongs to the glycosyltransferase 4 family. MraY subfamily. Requires Mg(2+) as cofactor.

Its subcellular location is the cell inner membrane. The enzyme catalyses UDP-N-acetyl-alpha-D-muramoyl-L-alanyl-gamma-D-glutamyl-meso-2,6-diaminopimeloyl-D-alanyl-D-alanine + di-trans,octa-cis-undecaprenyl phosphate = di-trans,octa-cis-undecaprenyl diphospho-N-acetyl-alpha-D-muramoyl-L-alanyl-D-glutamyl-meso-2,6-diaminopimeloyl-D-alanyl-D-alanine + UMP. The protein operates within cell wall biogenesis; peptidoglycan biosynthesis. Catalyzes the initial step of the lipid cycle reactions in the biosynthesis of the cell wall peptidoglycan: transfers peptidoglycan precursor phospho-MurNAc-pentapeptide from UDP-MurNAc-pentapeptide onto the lipid carrier undecaprenyl phosphate, yielding undecaprenyl-pyrophosphoryl-MurNAc-pentapeptide, known as lipid I. In Shewanella loihica (strain ATCC BAA-1088 / PV-4), this protein is Phospho-N-acetylmuramoyl-pentapeptide-transferase.